The primary structure comprises 235 residues: GNKQSPVDIKSSEVKHDTSLKPFSVSYNPASAKEIINVGHSFHVNFEDDSQSVLKGGPLSDNYRLSQFHFHWGKTDDYGSEHTVDGAKFSAELHLVHWNSGKYPNIADSVSKADGLAIVAVFLKVGQANPKLQKVLDALSAVKTKGKKASFTNFDPSTLLPPSLDYWTYSGSLTHPPLHESVTWLICKDSISISSEQLAQFRSLLSNAEGEAAVPILHNNRPPQPLKGRTVKASF.

One can recognise an Alpha-carbonic anhydrase domain in the interval 1-235 (GNKQSPVDIK…LKGRTVKASF (235 aa)). The Proton donor/acceptor role is filled by H40. Residues H69, H71, and H94 each coordinate Zn(2+). Residues T174 and 174–175 (TH) each bind substrate.

Belongs to the alpha-carbonic anhydrase family. Zn(2+) is required as a cofactor.

The protein localises to the cytoplasm. The enzyme catalyses hydrogencarbonate + H(+) = CO2 + H2O. It catalyses the reaction urea = cyanamide + H2O. Inhibited by acetazolamide. Its function is as follows. Catalyzes the reversible hydration of carbon dioxide. Can hydrate cyanamide to urea. This Oryctolagus cuniculus (Rabbit) protein is Carbonic anhydrase 1 (CA1).